The chain runs to 141 residues: Mu-like prophage FluMu protein gp36 (141 aa).

It to phage Mu protein gp36.

The polypeptide is Mu-like prophage FluMu protein gp36 (Haemophilus influenzae (strain ATCC 51907 / DSM 11121 / KW20 / Rd)).